The chain runs to 312 residues: Coiled-coil domain-containing protein 42 homolog (312 aa).

Coiled-coil stretches lie at residues 34–121 (RLLE…RLKE) and 172–233 (ATHQ…WESQ).

Belongs to the CFAP73 family.

This is Coiled-coil domain-containing protein 42 homolog from Nematostella vectensis (Starlet sea anemone).